Reading from the N-terminus, the 925-residue chain is Coronin-7 (925 aa).

4 WD repeats span residues 75 to 115 (CHSD…QALP), 124 to 163 (PEDL…PLTE), 166 to 205 (AHGD…RASQ), and 209 to 253 (AHEN…SALA). Residues 419–461 (VGDADASEGFSSPPSSLTSPSTPSSLGPSLSSTSGIGTSPSLR) form a disordered region. Low complexity predominate over residues 429-460 (SSPPSSLTSPSTPSSLGPSLSSTSGIGTSPSL). Phosphoserine is present on residues Ser462 and Ser465. Lys472 is covalently cross-linked (Glycyl lysine isopeptide (Lys-Gly) (interchain with G-Cter in ubiquitin)). 3 WD repeats span residues 542–582 (QNGA…LEEV), 592–632 (GHTE…DRLK), and 635–674 (GHQD…EPLQ). Lys680 participates in a covalent cross-link: Glycyl lysine isopeptide (Lys-Gly) (interchain with G-Cter in ubiquitin). The WD 8 repeat unit spans residues 728 to 768 (DVAPSTLLPSYDPDTGLVLLTGKGDTRVFLYELLPESPFFL). Residues 858–925 (QPPDMSPVSQ…FEGVDEDEWD (68 aa)) are disordered. Low complexity predominate over residues 866–882 (SQAPREAPARRAPSSAQ). Positions 884–896 (LEEKSDQQKKEEL) are enriched in basic and acidic residues. Position 915 is a phosphoserine (Ser915).

It belongs to the WD repeat coronin family. As to quaternary structure, interacts with clathrin adapter AP1 complex. This interaction takes place at Golgi membranes and not AP1-positive endosomal membranes. Interacts (when ubiquitinated at Lys-472) with EPS15. The membrane-associated form is phosphorylated on tyrosine residues. In terms of processing, ubiquitinated via 'Lys-33'-linked ubiquitin chains by the BCR(KLHL20) E3 ubiquitin ligase complex: 'Lys-33'-linked ubiquitination promotes interaction with EPS15 and facilitates actin polymerization at the trans-Golgi network, thereby facilitating post-Golgi trafficking. Deubiquitinated by ZRANB1/TRABID. In terms of tissue distribution, widely expressed. Expressed in the spleen, peripheral leukocytes, testes, brain, thymus and small intestine.

The protein localises to the golgi apparatus membrane. Its subcellular location is the golgi apparatus. It localises to the trans-Golgi network. It is found in the cytoplasmic vesicle. The protein resides in the cytoplasm. The protein localises to the cytosol. In terms of biological role, F-actin regulator involved in anterograde Golgi to endosome transport: upon ubiquitination via 'Lys-33'-linked ubiquitin chains by the BCR(KLHL20) E3 ubiquitin ligase complex, interacts with EPS15 and localizes to the trans-Golgi network, where it promotes actin polymerization, thereby facilitating post-Golgi trafficking. May play a role in the maintenance of the Golgi apparatus morphology. The sequence is that of Coronin-7 (CORO7) from Homo sapiens (Human).